Reading from the N-terminus, the 260-residue chain is Type II methyltransferase M.CviBI (260 aa).

4 residues coordinate S-adenosyl-L-methionine: W7, K11, D54, and D177.

This sequence belongs to the N(4)/N(6)-methyltransferase family.

It catalyses the reaction a 2'-deoxyadenosine in DNA + S-adenosyl-L-methionine = an N(6)-methyl-2'-deoxyadenosine in DNA + S-adenosyl-L-homocysteine + H(+). Functionally, a alpha subtype methylase, recognizes the double-stranded sequence 5'-GANTC-3', methylates A-2 on both strands, and protects the DNA from cleavage by the CviBI endonuclease. The protein is Type II methyltransferase M.CviBI of Paramecium bursaria Chlorella virus NC1A (PBCV-NC1A).